The sequence spans 472 residues: Methanethiol oxidase (472 aa).

Ala2 is modified (N-acetylalanine). Residues Ser111, Ser371, and Ser467 each carry the phosphoserine modification.

The protein belongs to the selenium-binding protein family. In terms of assembly, interacts with USP33. In terms of processing, the N-terminus is blocked.

It localises to the nucleus. It is found in the cytoplasm. The protein localises to the cytosol. The protein resides in the membrane. The enzyme catalyses methanethiol + O2 + H2O = hydrogen sulfide + formaldehyde + H2O2 + H(+). It participates in organosulfur degradation. Its function is as follows. Catalyzes the oxidation of methanethiol, an organosulfur compound known to be produced in substantial amounts by gut bacteria. Selenium-binding protein which may be involved in the sensing of reactive xenobiotics in the cytoplasm. May be involved in intra-Golgi protein transport. The protein is Methanethiol oxidase (SELENBP1) of Pongo abelii (Sumatran orangutan).